We begin with the raw amino-acid sequence, 270 residues long: Undecaprenyl-diphosphatase 1 (270 aa).

6 helical membrane passes run 79–99, 105–125, 155–175, 182–202, 215–235, and 242–262; these read NLLLGIVIAFIPAAVAGLLFS, VLFNPVCVAIAFIVGGLIILW, LALIPGTSRSGATIIGGLFLG, TEFSFFLGIPTLGAASLYSLI, VFAVGFIASFVFAFLAIRALL, and SFAVFAWYRIAFGLIVLGTWW.

This sequence belongs to the UppP family.

It localises to the cell inner membrane. The enzyme catalyses di-trans,octa-cis-undecaprenyl diphosphate + H2O = di-trans,octa-cis-undecaprenyl phosphate + phosphate + H(+). Catalyzes the dephosphorylation of undecaprenyl diphosphate (UPP). Confers resistance to bacitracin. In Chromobacterium violaceum (strain ATCC 12472 / DSM 30191 / JCM 1249 / CCUG 213 / NBRC 12614 / NCIMB 9131 / NCTC 9757 / MK), this protein is Undecaprenyl-diphosphatase 1.